Here is a 141-residue protein sequence, read N- to C-terminus: Large ribosomal subunit protein uL16 (141 aa).

This sequence belongs to the universal ribosomal protein uL16 family. Part of the 50S ribosomal subunit. Contacts the CTC protein (RL25).

Binds the 5S and 23S rRNAs and is also seen to make contacts with the A and P site tRNAs. Interacts with A site tRNA mimics, and is probably one of the key factors, along with a helix of the 23S rRNA, in positioning tRNA stems in the peptidyl-transferase center. The sequence is that of Large ribosomal subunit protein uL16 (rplP) from Deinococcus radiodurans (strain ATCC 13939 / DSM 20539 / JCM 16871 / CCUG 27074 / LMG 4051 / NBRC 15346 / NCIMB 9279 / VKM B-1422 / R1).